The primary structure comprises 218 residues: PKHD-type hydroxylase Sala_1910 (218 aa).

The Fe2OG dioxygenase domain occupies 74 to 172 (RIAPPLLTRY…RLVAITFIQS (99 aa)). Fe cation is bound by residues His-92, Asp-94, and His-153. 2-oxoglutarate is bound at residue Arg-163.

The cofactor is Fe(2+). Requires L-ascorbate as cofactor.

The protein is PKHD-type hydroxylase Sala_1910 of Sphingopyxis alaskensis (strain DSM 13593 / LMG 18877 / RB2256) (Sphingomonas alaskensis).